We begin with the raw amino-acid sequence, 339 residues long: Ketol-acid reductoisomerase (NADP(+)) (339 aa).

The KARI N-terminal Rossmann domain maps to 1–182; that stretch reads MRVYYDRDAD…GGGRAGVIET (182 aa). Residues 24–27, Arg-48, Ser-51, Thr-53, and 83–86 contribute to the NADP(+) site; these read YGSQ and DELQ. Residue His-108 is part of the active site. Gly-134 is a binding site for NADP(+). Positions 183–328 constitute a KARI C-terminal knotted domain; the sequence is TFKEECETDL…KKLRSMMPWI (146 aa). Residues Asp-191, Glu-195, Glu-227, and Glu-231 each contribute to the Mg(2+) site. Ser-252 lines the substrate pocket.

This sequence belongs to the ketol-acid reductoisomerase family. Mg(2+) is required as a cofactor.

It catalyses the reaction (2R)-2,3-dihydroxy-3-methylbutanoate + NADP(+) = (2S)-2-acetolactate + NADPH + H(+). The enzyme catalyses (2R,3R)-2,3-dihydroxy-3-methylpentanoate + NADP(+) = (S)-2-ethyl-2-hydroxy-3-oxobutanoate + NADPH + H(+). It participates in amino-acid biosynthesis; L-isoleucine biosynthesis; L-isoleucine from 2-oxobutanoate: step 2/4. It functions in the pathway amino-acid biosynthesis; L-valine biosynthesis; L-valine from pyruvate: step 2/4. Its function is as follows. Involved in the biosynthesis of branched-chain amino acids (BCAA). Catalyzes an alkyl-migration followed by a ketol-acid reduction of (S)-2-acetolactate (S2AL) to yield (R)-2,3-dihydroxy-isovalerate. In the isomerase reaction, S2AL is rearranged via a Mg-dependent methyl migration to produce 3-hydroxy-3-methyl-2-ketobutyrate (HMKB). In the reductase reaction, this 2-ketoacid undergoes a metal-dependent reduction by NADPH to yield (R)-2,3-dihydroxy-isovalerate. This chain is Ketol-acid reductoisomerase (NADP(+)), found in Bartonella tribocorum (strain CIP 105476 / IBS 506).